Consider the following 469-residue polypeptide: Acyltransferase clz18 (469 aa).

The next 7 helical transmembrane spans lie at 21–41, 70–90, 134–154, 253–273, 346–366, 391–411, and 424–444; these read GLLS…LGYD, LFTI…CLFF, LSLL…TGFF, ILAA…PLFW, GLIV…LYSL, IYLI…SWVW, and VGFG…AAIF.

The protein belongs to the acyltransferase 3 family.

The protein localises to the membrane. Its pathway is secondary metabolite biosynthesis. In terms of biological role, acyltransferase; part of the gene cluster that mediates the biosynthesis of squalestatin S1 (SQS1, also known as zaragozic acid A), a heavily oxidized fungal polyketide that offers potent cholesterol lowering activity by targeting squalene synthase (SS). SQS1 is composed of a 2,8-dioxobicyclic[3.2.1]octane-3,4,5-tricarboxyclic acid core that is connected to two lipophilic polyketide arms. These initial steps feature the priming of an unusual benzoic acid starter unit onto the highly reducing polyketide synthase clz14, followed by oxaloacetate extension and product release to generate a tricarboxylic acid containing product. The phenylalanine ammonia lyase (PAL) clz10 and the acyl-CoA ligase clz12 are involved in transforming phenylalanine into benzoyl-CoA. The citrate synthase-like protein clz17 is involved in connecting the C-alpha-carbons of the hexaketide chain and oxaloacetate to afford the tricarboxylic acid unit. The potential hydrolytic enzymes, clz11 and clz13, are in close proximity to pks2 and may participate in product release. On the other side, the tetraketide arm is synthesized by a the squalestatin tetraketide synthase clz2 and enzymatically esterified to the core in the last biosynthetic step, by the acetyltransferase clz6. The biosynthesis of the tetraketide must involve 3 rounds of chain extension. After the first and second rounds methyl-transfer occurs, and in all rounds of extension the ketoreductase and dehydratase are active. The enoyl reductase and C-MeT of clz2 are not active in the final round of extension. The acetyltransferase clz6 appears to have a broad substrate selectivity for its acyl CoA substrate, allowing the in vitro synthesis of novel squalestatins. The biosynthesis of SQS1 requires several oxidative steps likely performed by oxidoreductases clz3, clz15 and clz16. Finally, in support of the identification of the cluster as being responsible for SQS1 production, the cluster contains a gene encoding a putative squalene synthase (SS) clz20, suggesting a likely mechanism for self-resistance. This chain is Acyltransferase clz18, found in Cochliobolus lunatus (Filamentous fungus).